We begin with the raw amino-acid sequence, 290 residues long: Fructokinase (290 aa).

Threonine 130 serves as a coordination point for ATP. 4 residues coordinate Zn(2+): histidine 153, cysteine 169, histidine 172, and cysteine 175. ATP contacts are provided by residues proline 183 and glycine 231 to lysine 235.

Belongs to the ROK (NagC/XylR) family. In terms of assembly, homodimer. Mg(2+) serves as cofactor.

The enzyme catalyses D-fructose + ATP = D-fructose 6-phosphate + ADP + H(+). Its activity is regulated as follows. Inactivated by EDTA. Inhibition by zinc ions (Potential). This chain is Fructokinase (scrK), found in Lactococcus lactis subsp. cremoris (Streptococcus cremoris).